Reading from the N-terminus, the 666-residue chain is MTPFQLQARYQPMGDQPTAIAQLVEQVQAGAPYQTLLGATGTGKTFTIANVIAQVGRPALVLAHNKTLAAQLCNELREFFPNNAVEYFISYYDYYQPEAYIPVTDTYIAKTASINEEIDMLRHSATRNLFERRDVIVVASISCIYGLGIPSEYLKAAIPLEVGAEINMREVLRQLVDVQYSRNDLESGRGRFRVKGDVLEIGPAYEDRIIRVEFFGDEIDAIRYIDPVTGEILQSLDRLNIYPARHFVTPEERLEIAIAEIKEELNQQLLTLQAEGKLVEAQRLEQRTRYDLEMLQEVGYCNGVENYARHLAGREPGSPPECLIDYFPKDWLLVVDESHVTVPQLRGMYNGDQSRKKVLVDHGFRLPSAADNRPLKSEEFWEKVRQCIFVSATPGDWEIERSEEQIVEQVIRPTGVVDPEVFVRPTEGQVDDLLAEIQQRVRRQERALITTLTKRMAEDLTDYLSDRGVKVRYLHSEINSIERIEILQDLRNGDFDVLIGVNLLREGLDLPEVSLVAILDADKEGFLRTERSLIQTIGRAARHINGQAILYADRMTESMEKAISETERRRRIQLDYNQRHNITPQPIIKRSSNAILSFLEVSRRLNKQELEVAVSQADDLSLEEIPNLITQLEAQMKEAAKNLEFEEAAQYRDRIKKLRERLVGRH.

The Helicase ATP-binding domain maps to 25–412; that stretch reads EQVQAGAPYQ…EEQIVEQVIR (388 aa). Position 38–45 (38–45) interacts with ATP; the sequence is GATGTGKT. The Beta-hairpin motif lies at 91 to 114; the sequence is YYDYYQPEAYIPVTDTYIAKTASI. A Helicase C-terminal domain is found at 429–595; the sequence is QVDDLLAEIQ…PIIKRSSNAI (167 aa). The region spanning 626–661 is the UVR domain; the sequence is PNLITQLEAQMKEAAKNLEFEEAAQYRDRIKKLRER.

The protein belongs to the UvrB family. In terms of assembly, forms a heterotetramer with UvrA during the search for lesions. Interacts with UvrC in an incision complex.

The protein localises to the cytoplasm. Functionally, the UvrABC repair system catalyzes the recognition and processing of DNA lesions. A damage recognition complex composed of 2 UvrA and 2 UvrB subunits scans DNA for abnormalities. Upon binding of the UvrA(2)B(2) complex to a putative damaged site, the DNA wraps around one UvrB monomer. DNA wrap is dependent on ATP binding by UvrB and probably causes local melting of the DNA helix, facilitating insertion of UvrB beta-hairpin between the DNA strands. Then UvrB probes one DNA strand for the presence of a lesion. If a lesion is found the UvrA subunits dissociate and the UvrB-DNA preincision complex is formed. This complex is subsequently bound by UvrC and the second UvrB is released. If no lesion is found, the DNA wraps around the other UvrB subunit that will check the other stand for damage. This is UvrABC system protein B from Synechococcus sp. (strain ATCC 27144 / PCC 6301 / SAUG 1402/1) (Anacystis nidulans).